A 249-amino-acid polypeptide reads, in one-letter code: DNA repair protein RecO (249 aa).

Belongs to the RecO family.

Its function is as follows. Involved in DNA repair and RecF pathway recombination. In Exiguobacterium sibiricum (strain DSM 17290 / CCUG 55495 / CIP 109462 / JCM 13490 / 255-15), this protein is DNA repair protein RecO.